The primary structure comprises 397 residues: Succinyl-diaminopimelate desuccinylase (397 aa).

His-73 contacts Zn(2+). Residue Asp-75 is part of the active site. Asp-106 lines the Zn(2+) pocket. Residue Glu-140 is the Proton acceptor of the active site. 3 residues coordinate Zn(2+): Glu-141, Glu-169, and His-366.

This sequence belongs to the peptidase M20A family. DapE subfamily. Homodimer. It depends on Zn(2+) as a cofactor. Requires Co(2+) as cofactor.

It catalyses the reaction N-succinyl-(2S,6S)-2,6-diaminopimelate + H2O = (2S,6S)-2,6-diaminopimelate + succinate. It functions in the pathway amino-acid biosynthesis; L-lysine biosynthesis via DAP pathway; LL-2,6-diaminopimelate from (S)-tetrahydrodipicolinate (succinylase route): step 3/3. In terms of biological role, catalyzes the hydrolysis of N-succinyl-L,L-diaminopimelic acid (SDAP), forming succinate and LL-2,6-diaminopimelate (DAP), an intermediate involved in the bacterial biosynthesis of lysine and meso-diaminopimelic acid, an essential component of bacterial cell walls. The polypeptide is Succinyl-diaminopimelate desuccinylase (Rhizobium rhizogenes (strain K84 / ATCC BAA-868) (Agrobacterium radiobacter)).